The primary structure comprises 357 residues: MVRLTLDLIARNSNLKPRKEETISQCLKKITHINFSDKNIDAIEDLSLCKNLSVLYLYDNCISQITNLNYATNLTHLYLQNNCIPCIENLRSLKKLEKLYLGGNYIAVIEGLEGLGELRELHVENQRLPLGEKLLFDPRTLHSLAKSLSILNISNNNIDDIRDLEILENLNQLIAVDNQLLHVKDLEFLLNKLMKLWKIDLNGNPVCLKPKYRDRLILVSKSLEFLDGKEIKNIERQFLMNWKASKDAKKISKKRSSKNEDASNSLISNFETMHHIVPVYYPQVGKPKLVFFSEIQRYPVNGNASPESSREDYTKIIEEMGNLSLKQSESLLTKNDVHEPHLFHNPKEKENLFAENE.

7 LRR repeats span residues 29–50 (KITH…SLCK), 51–72 (NLSV…NYAT), 73–94 (NLTH…RSLK), 95–116 (KLEK…EGLG), 117–138 (ELRE…LFDP), 147–168 (SLSI…EILE), and 169–190 (NLNQ…EFLL). The LRRCT domain occupies 204 to 242 (NPVCLKPKYRDRLILVSKSLEFLDGKEIKNIERQFLMNW).

Interacts with PPP1CC isoform gamma-2; the interaction is direct. Interacts with actin, dynein, KIF5B, KIFC1 and tubulin. Associates with microtubules. In terms of processing, phosphorylated; in the testis.

It is found in the cytoplasm. The protein resides in the cytoskeleton. It localises to the microtubule organizing center. The protein localises to the centrosome. Functionally, regulates phosphatase activity of protein phosphatase 1 (PP1) complexes in the testis. The chain is Protein phosphatase 1 regulatory subunit 42 (PPP1R42) from Macaca fascicularis (Crab-eating macaque).